Here is a 114-residue protein sequence, read N- to C-terminus: Probable acid stress chaperone HdeA (114 aa).

The signal sequence occupies residues 1–26 (MIKTLFNKNTALAAVAILALSGSAMA). Cysteine 46 and cysteine 94 are joined by a disulfide.

Belongs to the HdeA family.

Its subcellular location is the periplasm. Required for optimal acid stress protection. Exhibits a chaperone-like activity only at low pH by suppressing non-specifically the aggregation of denaturated periplasmic proteins. The polypeptide is Probable acid stress chaperone HdeA (Brucella ovis (strain ATCC 25840 / 63/290 / NCTC 10512)).